The sequence spans 324 residues: Protein GET4 (324 aa).

This sequence belongs to the GET4 family. In terms of assembly, interacts with GET3A.

Its subcellular location is the cytoplasm. The protein localises to the cytosol. Involved in the regulation of root hair growth. In Arabidopsis thaliana (Mouse-ear cress), this protein is Protein GET4.